The primary structure comprises 295 residues: Probable dTDP-4,6-dihydroxy-2-methyloxan-3-one 4-ketoreductase (295 aa).

Residues 10-12 (GML), 36-37 (DV), 60-62 (AYT), Tyr126, and Lys130 contribute to the NADH site. NADPH contacts are provided by residues 11–12 (ML), 36–37 (DV), 60–62 (AYT), Tyr126, and Lys130. Tyr126 functions as the Proton donor/acceptor in the catalytic mechanism.

The protein belongs to the dTDP-4-dehydrorhamnose reductase family. Requires Mg(2+) as cofactor.

It participates in antibiotic biosynthesis. In terms of biological role, involved in the biosynthesis of one of the two 2,6-deoxysugars, dTDP-L-oleandrose, attached to the macrolactone ring oleandolide to produce the aglycone antibiotic oleandomycin. Probably catalyzes the reduction of dTDP-4-keto-2,6-dideoxy-beta-L-galactose to yield dTDP-L-olivose. The sequence is that of Probable dTDP-4,6-dihydroxy-2-methyloxan-3-one 4-ketoreductase from Streptomyces antibioticus.